The sequence spans 87 residues: Large ribosomal subunit protein bL31B (87 aa).

Belongs to the bacterial ribosomal protein bL31 family. Type B subfamily. In terms of assembly, part of the 50S ribosomal subunit.

This chain is Large ribosomal subunit protein bL31B, found in Salinispora arenicola (strain CNS-205).